The following is a 381-amino-acid chain: Anti-sigma-I factor RsgI (381 aa).

Residues M1–K63 lie on the Cytoplasmic side of the membrane. The RsgI N-terminal anti-sigma domain maps to R2–R50. The chain crosses the membrane as a helical span at residues M64–S84. Residues N85–E381 lie on the Extracellular side of the membrane. The segment at S198–E381 is disordered. 4 stretches are compositionally biased toward basic and acidic residues: residues M200–G210, S219–D244, G273–N321, and S349–N359.

As to quaternary structure, interacts (via RsgI N-terminal anti-sigma domain) with SigI.

Its subcellular location is the cell membrane. Functionally, anti-sigma factor for SigI. Negatively regulates SigI activity through direct interaction. This chain is Anti-sigma-I factor RsgI, found in Bacillus subtilis (strain 168).